We begin with the raw amino-acid sequence, 186 residues long: MYLMKDITRDGNPVLRKRAAKVSFPLSDEDQKLAKDMMKYLEVSQDPELCKKYKLRAGVGLAAPQVGVSKQMAAVLVPAPDEDEKPLFKDVIINPVIVSESVQYGALTEGEGCLSVDKDVPGYVPRHDRITLRYQDVNGETHKVRLKHYPAIVCQHEIDHLHGVLFYDHINKDQPFEAPADTVMIS.

Residues cysteine 113 and histidine 156 each contribute to the Fe cation site. Glutamate 157 is an active-site residue. A Fe cation-binding site is contributed by histidine 160.

It belongs to the polypeptide deformylase family. Requires Fe(2+) as cofactor.

The catalysed reaction is N-terminal N-formyl-L-methionyl-[peptide] + H2O = N-terminal L-methionyl-[peptide] + formate. Its function is as follows. Removes the formyl group from the N-terminal Met of newly synthesized proteins. Requires at least a dipeptide for an efficient rate of reaction. N-terminal L-methionine is a prerequisite for activity but the enzyme has broad specificity at other positions. This Limosilactobacillus reuteri (strain DSM 20016) (Lactobacillus reuteri) protein is Peptide deformylase.